We begin with the raw amino-acid sequence, 242 residues long: Dehydration-responsive element-binding protein 1J (242 aa).

The span at serine 20–threonine 29 shows a compositional bias: low complexity. The disordered stretch occupies residues serine 20–glutamine 44. A DNA-binding region (AP2/ERF) is located at residues valine 50–threonine 109. The disordered stretch occupies residues phenylalanine 143–threonine 184. Residues serine 148–threonine 184 are compositionally biased toward low complexity.

The protein belongs to the AP2/ERF transcription factor family. ERF subfamily.

The protein resides in the nucleus. Transcriptional activator that binds specifically to the DNA sequence 5'-[AG]CCGAC-3'. Binding to the C-repeat/DRE element mediates high salinity- and dehydration-inducible transcription. The chain is Dehydration-responsive element-binding protein 1J (DREB1J) from Oryza sativa subsp. indica (Rice).